Consider the following 461-residue polypeptide: Glycogen synthase (461 aa).

Lys-15 contributes to the ADP-alpha-D-glucose binding site.

Belongs to the glycosyltransferase 1 family. Bacterial/plant glycogen synthase subfamily.

The enzyme catalyses [(1-&gt;4)-alpha-D-glucosyl](n) + ADP-alpha-D-glucose = [(1-&gt;4)-alpha-D-glucosyl](n+1) + ADP + H(+). Its pathway is glycan biosynthesis; glycogen biosynthesis. In terms of biological role, synthesizes alpha-1,4-glucan chains using ADP-glucose. The sequence is that of Glycogen synthase from Fusobacterium nucleatum subsp. nucleatum (strain ATCC 25586 / DSM 15643 / BCRC 10681 / CIP 101130 / JCM 8532 / KCTC 2640 / LMG 13131 / VPI 4355).